The chain runs to 482 residues: MASAASVSSLADEVNCPICQGTLREPVTIDCGHNFCCVCLTRYLEIPCLDPGELPTCPLCKEPFRPGSFRPNWQLASVVENIERLKLGSQLGSEEEEDVCLEHREKVYYFCEDDEMQLCVVCREAWEHRHHTVRFLEDAAGPYREQIQKCLECLRKEGEEIQRIQLRENQRIQVLLTQVATKKQKVISEFAHLSQFLEEQQSVLLAQLERLDGDILKHRDEFDVLVAGEICRFNTLIEELEEKNQRPARDLLTDIRSTLIRCETRRCRKPEAVSPELGQRIRDFPQQALPLRREMKTFLEKLCFELDYEPAHISLDPQTSHPKLLLSEDNQQARFSYKWQNSPDNPQRFDRATCVLAHSGFTEGRHTWVVSVDLAHGGSCTVGVVSQDIRRKGELRMRPEEGVWAVRLAWGFVSALGSFPTRLALEEHPRQVRVSIDYEVGWVTFVNAVTQEPIYTFTASFTQKVFPFFGLWGRGSKFSLSS.

The RING-type zinc finger occupies 16-61 (CPICQGTLREPVTIDCGHNFCCVCLTRYLEIPCLDPGELPTCPLCK). The B box-type zinc-finger motif lies at 95-136 (EEEDVCLEHREKVYYFCEDDEMQLCVVCREAWEHRHHTVRFL). Positions 100, 103, 122, and 128 each coordinate Zn(2+). Residues 293–482 (REMKTFLEKL…GRGSKFSLSS (190 aa)) enclose the B30.2/SPRY domain.

It belongs to the TRIM/RBCC family. As to quaternary structure, interacts with IFNAR1; this interaction prevents association of IFNAR1 with TYK2.

The protein resides in the cytoplasm. Functionally, E3 ligase that plays an essential role in the differentiation and survival of terminal erythroid cells. May directly bind to PTEN and promote its ubiquitination, resulting in its proteasomal degradation and activation of hypertrophic signaling. In addition, plays a role in immune response regulation by repressing the phosphorylation of STAT1 and STAT2 in the interferon/JAK/STAT signaling pathway independent of its E3 ligase activity. Mechanistically, interacts with the intracellular domain of IFNAR1 and thereby inhibits the association of TYK2 and IFNAR1. The chain is Tripartite motif-containing protein 10 (TRIM10) from Sus scrofa (Pig).